A 101-amino-acid polypeptide reads, in one-letter code: NADH-quinone oxidoreductase subunit K (101 aa).

Helical transmembrane passes span 4-24 (LAHF…GIFL), 30-50 (IVLL…FVAF), and 61-81 (VFVF…LAIL).

The protein belongs to the complex I subunit 4L family. NDH-1 is composed of 14 different subunits. Subunits NuoA, H, J, K, L, M, N constitute the membrane sector of the complex.

The protein localises to the cell inner membrane. It catalyses the reaction a quinone + NADH + 5 H(+)(in) = a quinol + NAD(+) + 4 H(+)(out). In terms of biological role, NDH-1 shuttles electrons from NADH, via FMN and iron-sulfur (Fe-S) centers, to quinones in the respiratory chain. The immediate electron acceptor for the enzyme in this species is believed to be ubiquinone. Couples the redox reaction to proton translocation (for every two electrons transferred, four hydrogen ions are translocated across the cytoplasmic membrane), and thus conserves the redox energy in a proton gradient. The sequence is that of NADH-quinone oxidoreductase subunit K from Cupriavidus necator (strain ATCC 17699 / DSM 428 / KCTC 22496 / NCIMB 10442 / H16 / Stanier 337) (Ralstonia eutropha).